Reading from the N-terminus, the 607-residue chain is Dihydroxy-acid dehydratase (607 aa).

Mg(2+) is bound at residue Asp81. Cys122 is a binding site for [2Fe-2S] cluster. Mg(2+) is bound by residues Asp123 and Lys124. Residue Lys124 is modified to N6-carboxylysine. Position 195 (Cys195) interacts with [2Fe-2S] cluster. Glu489 is a binding site for Mg(2+). Catalysis depends on Ser515, which acts as the Proton acceptor.

It belongs to the IlvD/Edd family. Homodimer. Requires [2Fe-2S] cluster as cofactor. Mg(2+) serves as cofactor.

It catalyses the reaction (2R)-2,3-dihydroxy-3-methylbutanoate = 3-methyl-2-oxobutanoate + H2O. It carries out the reaction (2R,3R)-2,3-dihydroxy-3-methylpentanoate = (S)-3-methyl-2-oxopentanoate + H2O. It participates in amino-acid biosynthesis; L-isoleucine biosynthesis; L-isoleucine from 2-oxobutanoate: step 3/4. It functions in the pathway amino-acid biosynthesis; L-valine biosynthesis; L-valine from pyruvate: step 3/4. Its function is as follows. Functions in the biosynthesis of branched-chain amino acids. Catalyzes the dehydration of (2R,3R)-2,3-dihydroxy-3-methylpentanoate (2,3-dihydroxy-3-methylvalerate) into 2-oxo-3-methylpentanoate (2-oxo-3-methylvalerate) and of (2R)-2,3-dihydroxy-3-methylbutanoate (2,3-dihydroxyisovalerate) into 2-oxo-3-methylbutanoate (2-oxoisovalerate), the penultimate precursor to L-isoleucine and L-valine, respectively. In Deinococcus radiodurans (strain ATCC 13939 / DSM 20539 / JCM 16871 / CCUG 27074 / LMG 4051 / NBRC 15346 / NCIMB 9279 / VKM B-1422 / R1), this protein is Dihydroxy-acid dehydratase.